Here is a 613-residue protein sequence, read N- to C-terminus: Kelch-like protein 36 (613 aa).

Positions 45 to 112 (CDVVLVVEEQ…LYSSELELDG (68 aa)) constitute a BTB domain. The BACK domain maps to 147-249 (YLYLQELASI…PEDILLQRVK (103 aa)). 6 Kelch repeats span residues 294–343 (CLLF…VLGG), 344–395 (FIFV…SIED), 396–442 (MLVA…IYKD), 444–491 (VYIS…SLGD), 492–544 (SIYS…VWQG), and 545–593 (RIYI…VCAL).

As to quaternary structure, interacts with CUL3.

Its pathway is protein modification; protein ubiquitination. In terms of biological role, probable substrate-specific adapter of an E3 ubiquitin-protein ligase complex which mediates the ubiquitination and subsequent proteasomal degradation of target proteins. In Rattus norvegicus (Rat), this protein is Kelch-like protein 36 (Klhl36).